Consider the following 176-residue polypeptide: 3-hydroxydecanoyl-[acyl-carrier-protein] dehydratase (176 aa).

Histidine 75 is a catalytic residue.

It belongs to the thioester dehydratase family. FabA subfamily. As to quaternary structure, homodimer.

Its subcellular location is the cytoplasm. The enzyme catalyses a (3R)-hydroxyacyl-[ACP] = a (2E)-enoyl-[ACP] + H2O. It catalyses the reaction (3R)-hydroxydecanoyl-[ACP] = (2E)-decenoyl-[ACP] + H2O. It carries out the reaction (2E)-decenoyl-[ACP] = (3Z)-decenoyl-[ACP]. It participates in lipid metabolism; fatty acid biosynthesis. Its function is as follows. Necessary for the introduction of cis unsaturation into fatty acids. Catalyzes the dehydration of (3R)-3-hydroxydecanoyl-ACP to E-(2)-decenoyl-ACP and then its isomerization to Z-(3)-decenoyl-ACP. Can catalyze the dehydratase reaction for beta-hydroxyacyl-ACPs with saturated chain lengths up to 16:0, being most active on intermediate chain length. The protein is 3-hydroxydecanoyl-[acyl-carrier-protein] dehydratase of Haemophilus ducreyi (strain 35000HP / ATCC 700724).